A 205-amino-acid polypeptide reads, in one-letter code: Peptidyl-tRNA hydrolase (205 aa).

Y17 serves as a coordination point for tRNA. The active-site Proton acceptor is H22. Residues Y73 and N75 each contribute to the tRNA site.

It belongs to the PTH family. As to quaternary structure, monomer.

It localises to the cytoplasm. It carries out the reaction an N-acyl-L-alpha-aminoacyl-tRNA + H2O = an N-acyl-L-amino acid + a tRNA + H(+). Functionally, hydrolyzes ribosome-free peptidyl-tRNAs (with 1 or more amino acids incorporated), which drop off the ribosome during protein synthesis, or as a result of ribosome stalling. Catalyzes the release of premature peptidyl moieties from peptidyl-tRNA molecules trapped in stalled 50S ribosomal subunits, and thus maintains levels of free tRNAs and 50S ribosomes. The chain is Peptidyl-tRNA hydrolase from Maridesulfovibrio salexigens (strain ATCC 14822 / DSM 2638 / NCIMB 8403 / VKM B-1763) (Desulfovibrio salexigens).